The primary structure comprises 44 residues: U2-agatoxin-Ao1s (44 aa).

The propeptide occupies 1 to 9 (KKVYSFLKL). 3 disulfides stabilise this stretch: cysteine 12-cysteine 28, cysteine 19-cysteine 33, and cysteine 27-cysteine 43.

Belongs to the neurotoxin 01 (U2-agtx) family. In terms of tissue distribution, expressed by the venom gland.

The protein localises to the secreted. Insect active toxin causing rapid but reversible paralysis in crickets. No activity shown in mammals. Does not show effect on mammalian voltage-gated calcium channels. The chain is U2-agatoxin-Ao1s from Agelena orientalis (Funnel-web spider).